Here is a 47-residue protein sequence, read N- to C-terminus: GNCKCDDEGPNVRTAPLTGYVDLGYCNEGWEKCASYYSPIAECCRKK.

3 disulfide bridges follow: Cys3–Cys43, Cys5–Cys33, and Cys26–Cys44.

This sequence belongs to the sea anemone sodium channel inhibitory toxin family. Type II subfamily.

The protein localises to the secreted. The protein resides in the nematocyst. Functionally, binds to site 3 of voltage-gated sodium channels and inhibits the inactivation process. This Radianthus crispa (Leathery sea anemone) protein is Delta-stichotoxin-Hcr1d.